Here is a 415-residue protein sequence, read N- to C-terminus: Serine hydroxymethyltransferase (415 aa).

Residues leucine 117 and 121-123 (GHL) contribute to the (6S)-5,6,7,8-tetrahydrofolate site. At lysine 226 the chain carries N6-(pyridoxal phosphate)lysine.

The protein belongs to the SHMT family. In terms of assembly, homodimer. Pyridoxal 5'-phosphate is required as a cofactor.

The protein resides in the cytoplasm. The catalysed reaction is (6R)-5,10-methylene-5,6,7,8-tetrahydrofolate + glycine + H2O = (6S)-5,6,7,8-tetrahydrofolate + L-serine. It functions in the pathway one-carbon metabolism; tetrahydrofolate interconversion. The protein operates within amino-acid biosynthesis; glycine biosynthesis; glycine from L-serine: step 1/1. Catalyzes the reversible interconversion of serine and glycine with tetrahydrofolate (THF) serving as the one-carbon carrier. This reaction serves as the major source of one-carbon groups required for the biosynthesis of purines, thymidylate, methionine, and other important biomolecules. Also exhibits THF-independent aldolase activity toward beta-hydroxyamino acids, producing glycine and aldehydes, via a retro-aldol mechanism. This is Serine hydroxymethyltransferase from Leptospira borgpetersenii serovar Hardjo-bovis (strain JB197).